Reading from the N-terminus, the 367-residue chain is Alanine racemase (367 aa).

Lysine 35 serves as the catalytic Proton acceptor; specific for D-alanine. The residue at position 35 (lysine 35) is an N6-(pyridoxal phosphate)lysine. Arginine 130 lines the substrate pocket. Tyrosine 256 (proton acceptor; specific for L-alanine) is an active-site residue. Position 304 (methionine 304) interacts with substrate.

This sequence belongs to the alanine racemase family. The cofactor is pyridoxal 5'-phosphate.

The catalysed reaction is L-alanine = D-alanine. Its pathway is amino-acid biosynthesis; D-alanine biosynthesis; D-alanine from L-alanine: step 1/1. Its function is as follows. Catalyzes the interconversion of L-alanine and D-alanine. May also act on other amino acids. In Methylibium petroleiphilum (strain ATCC BAA-1232 / LMG 22953 / PM1), this protein is Alanine racemase (alr).